We begin with the raw amino-acid sequence, 150 residues long: MKVIFTQDVKGKGKGKKGEVKEVPVGYANNFLLKKNYAVEATPGNLKQLELQKKRAKQERQQEIEDAKALKETLSNIEVEVSAKTGEGGKLFGSVSTKQIAEALKAQHDIKIDKRKMDLPNGIHSLGYTNVPVKLDKEVEGTIRVHTVEQ.

Belongs to the bacterial ribosomal protein bL9 family.

Its function is as follows. Binds to the 23S rRNA. The sequence is that of Large ribosomal subunit protein bL9 from Staphylococcus aureus (strain NCTC 8325 / PS 47).